The sequence spans 305 residues: Protoheme IX farnesyltransferase 2 (305 aa).

Helical transmembrane passes span 38 to 58 (LITT…SFLG), 60 to 80 (LNTV…SCAV), 115 to 135 (ILLI…AAVI), 157 to 177 (INTV…WTAV), 181 to 201 (IGVV…PHFL), 236 to 256 (VACL…IVIL), and 285 to 305 (FVYS…FTLF).

The protein belongs to the UbiA prenyltransferase family. Protoheme IX farnesyltransferase subfamily. In terms of assembly, interacts with CtaA.

It localises to the cell membrane. The enzyme catalyses heme b + (2E,6E)-farnesyl diphosphate + H2O = Fe(II)-heme o + diphosphate. Its pathway is porphyrin-containing compound metabolism; heme O biosynthesis; heme O from protoheme: step 1/1. Functionally, converts heme B (protoheme IX) to heme O by substitution of the vinyl group on carbon 2 of heme B porphyrin ring with a hydroxyethyl farnesyl side group. The polypeptide is Protoheme IX farnesyltransferase 2 (Bacillus velezensis (strain DSM 23117 / BGSC 10A6 / LMG 26770 / FZB42) (Bacillus amyloliquefaciens subsp. plantarum)).